We begin with the raw amino-acid sequence, 340 residues long: S-adenosylmethionine:tRNA ribosyltransferase-isomerase (340 aa).

It belongs to the QueA family. Monomer.

The protein localises to the cytoplasm. It carries out the reaction 7-aminomethyl-7-carbaguanosine(34) in tRNA + S-adenosyl-L-methionine = epoxyqueuosine(34) in tRNA + adenine + L-methionine + 2 H(+). It participates in tRNA modification; tRNA-queuosine biosynthesis. Transfers and isomerizes the ribose moiety from AdoMet to the 7-aminomethyl group of 7-deazaguanine (preQ1-tRNA) to give epoxyqueuosine (oQ-tRNA). This Aliarcobacter butzleri (strain RM4018) (Arcobacter butzleri) protein is S-adenosylmethionine:tRNA ribosyltransferase-isomerase.